The sequence spans 135 residues: M-zodatoxin-Lt8q (135 aa).

Residues methionine 1–serine 20 form the signal peptide. Residues lysine 21–arginine 60 constitute a propeptide that is removed on maturation.

This sequence belongs to the cationic peptide 06 (cytoinsectotoxin) family. Expressed by the venom gland.

The protein localises to the secreted. In terms of biological role, insecticidal, cytolytic and antimicrobial peptide. Forms voltage-dependent, ion-permeable channels in membranes. At high concentration causes cell membrane lysis. The protein is M-zodatoxin-Lt8q (cit 1-16) of Lachesana tarabaevi (Spider).